A 635-amino-acid polypeptide reads, in one-letter code: MINISFPDGSIKQFAKNITAYEVANAISMSLAKAAMVAEINGELQDLSIVIDNDCKLRILTAKDPECLEIIRHDAAHLTAEAVKELFPETQVTIGPAIENGYYYDFARDTPFTTDDLAVIEAKMQELSQKNEQVTRELWDRDKAVEFFKSIGEHYKAEIIASIPAGEPITLYRQGNFIDLCRGPHAPSTGVVKHFKLMKVAGAYWRGDSRNEMLQRIYGTAWATKEQLDSYLLMLEEAEKRDHRKLGRELDLFHFQEEAQGMVFWHDKGWSIYNTIEQYIRKKIRKNGYTEVKTPVLVDKSLWEASGHWEKFRDDMFALETDDKTLALKPMNCPCHVQIFKQGIKSYRDLPLRMSEFGLCHRNEASGALHGLMRVRSLVQDDAHIFCAAEQITDETVSFCKLLTEVYKDFGFTDIKVKFSDRPEIRAGSNEVWDKAENALKEAVEQAGFTYTLNPGEGAFYGPKLEFVLTDAIGRQWQCGTLQMDFVLPERLDASYVAASGEKKRPVMLHRAILGSLERFIGILIEEYAGRFPLWLAPVQVAIATITSDLNDYALEVQKALIDNGVRTDFNISPDKINYKIREFSNQKIPMIAVIGKQEQKNKQVAIRRLGTTDQEVLSVEQLIAVVKEENEKYL.

Residues 1–61 (MINISFPDGS…DNDCKLRILT (61 aa)) enclose the TGS domain. The tract at residues 242–533 (DHRKLGRELD…LIEEYAGRFP (292 aa)) is catalytic. Residues Cys333, His384, and His510 each coordinate Zn(2+).

Belongs to the class-II aminoacyl-tRNA synthetase family. As to quaternary structure, homodimer. Zn(2+) serves as cofactor.

It is found in the cytoplasm. It carries out the reaction tRNA(Thr) + L-threonine + ATP = L-threonyl-tRNA(Thr) + AMP + diphosphate + H(+). Catalyzes the attachment of threonine to tRNA(Thr) in a two-step reaction: L-threonine is first activated by ATP to form Thr-AMP and then transferred to the acceptor end of tRNA(Thr). Also edits incorrectly charged L-seryl-tRNA(Thr). The chain is Threonine--tRNA ligase from Rickettsia peacockii (strain Rustic).